Reading from the N-terminus, the 365-residue chain is Histidine biosynthesis bifunctional protein HisB (365 aa).

The interval 1-176 is histidinol-phosphatase; it reads MTQQPTLFID…VADPKGLGQP (176 aa). Asp-10 (nucleophile) is an active-site residue. Mg(2+) contacts are provided by Asp-10 and Asp-12. Asp-12 (proton donor) is an active-site residue. Zn(2+)-binding residues include Cys-93, His-95, Cys-101, and Cys-103. Residue Asp-130 participates in Mg(2+) binding. Residues 177-365 are imidazoleglycerol-phosphate dehydratase; the sequence is RHAVVARKTK…NEMPSSKGVL (189 aa).

The protein in the N-terminal section; belongs to the histidinol-phosphatase family. This sequence in the C-terminal section; belongs to the imidazoleglycerol-phosphate dehydratase family. Mg(2+) is required as a cofactor. The cofactor is Zn(2+).

The protein localises to the cytoplasm. It catalyses the reaction D-erythro-1-(imidazol-4-yl)glycerol 3-phosphate = 3-(imidazol-4-yl)-2-oxopropyl phosphate + H2O. The enzyme catalyses L-histidinol phosphate + H2O = L-histidinol + phosphate. Its pathway is amino-acid biosynthesis; L-histidine biosynthesis; L-histidine from 5-phospho-alpha-D-ribose 1-diphosphate: step 6/9. It functions in the pathway amino-acid biosynthesis; L-histidine biosynthesis; L-histidine from 5-phospho-alpha-D-ribose 1-diphosphate: step 8/9. In Mannheimia succiniciproducens (strain KCTC 0769BP / MBEL55E), this protein is Histidine biosynthesis bifunctional protein HisB.